The chain runs to 332 residues: Melanocortin receptor 4 (332 aa).

Topologically, residues 1 to 43 (MVNSTHRGMHASLHLWNRSSHRLHSNASESLGKGYSDGGCYEQ) are extracellular. N-linked (GlcNAc...) asparagine glycans are attached at residues asparagine 3, asparagine 17, and asparagine 26. Cystine bridges form between cysteine 40–cysteine 279 and cysteine 271–cysteine 277. Residues 44 to 69 (LFVSPEVFVTLGVISLLENILVIVAI) form a helical membrane-spanning segment. Topologically, residues 70-81 (AKNKNLHSPMYF) are cytoplasmic. A helical membrane pass occupies residues 82 to 106 (FICSLAVADMLVSVSNGSETIVITL). Ca(2+) contacts are provided by glutamate 100, aspartate 122, and aspartate 126. Topologically, residues 107-123 (LNSTDTDTQSFTVNIDN) are extracellular. The chain crosses the membrane as a helical span at residues 124-145 (VIDSVICSSLLASICSLLSIAV). The Cytoplasmic portion of the chain corresponds to 146 to 165 (DRYFTIFYALQYHNIMTVKR). Residues 166 to 186 (VRIIISCIWAACTVSGILFII) form a helical membrane-spanning segment. The Extracellular portion of the chain corresponds to 187–191 (YSDSS). A helical transmembrane segment spans residues 192–215 (AVIICLITMFFTMLALMASLYVHM). At 216–248 (FLMARLHIKRIAVLPGTGAIRQGANMKGAITLT) the chain is on the cytoplasmic side. Residues 249-271 (ILIGVFVVCWAPFFLHLIFYISC) form a helical membrane-spanning segment. The Extracellular segment spans residues 272-280 (PQNPYCVCF). The helical transmembrane segment at 281–304 (MSHFNLYLILIMCNSVIDPLIYAL) threads the bilayer. The Cytoplasmic segment spans residues 305-332 (RSQELRKTFKEIICCYPLGGLCDLSSRY). Residue cysteine 318 is the site of S-palmitoyl cysteine attachment.

Belongs to the G-protein coupled receptor 1 family. Homodimer; disulfide-linked, also forms higher order oligomers. Interacts with GNAS. Interacts with ATRNL1. Interacts with MGRN1; this interaction competes with GNAS-binding and thus inhibits agonist-induced cAMP production. Interacts with MRAP and MRAP2; these associated factors increase ligand-sensitivity and generation of cAMP.

The protein resides in the cell membrane. Functionally, hormone receptor that acts as a key component of the leptin-melanocortin pathway at the intersection of homeostatic maintenance of energetic state. Plays a role in regulating food intake: activation by a stimulating hormone such as anorexigenic alpha-melanocyte stimulating hormone (alpha-MSH) inhibits appetite, whereas binding to a natural antagonist like Agouti-related protein/AGRP promotes appetite. G-protein-coupled receptor that activates conventional Galphas signaling leading to induction of anorexogenic signaling in the hypothalamus to result in negative energy balance. Regulates the firing activity of neurons from the hypothalamus by alpha-MSH and AGRP independently of Galphas signaling by ligand-induced coupling of closure of inwardly rectifying potassium channel KCNJ13. In intestinal epithelial cells, plays a role in the inhibition of hepatic glucose production via nesfatin-1/NUCB2 leading to increased cyclic adenosine monophosphate (cAMP) levels and glucagon-like peptide 1 (GLP-1) secretion in the intestinal epithelium. The sequence is that of Melanocortin receptor 4 (MC4R) from Macaca fascicularis (Crab-eating macaque).